The primary structure comprises 192 residues: Large ribosomal subunit protein uL3 (192 aa).

The protein belongs to the universal ribosomal protein uL3 family. As to quaternary structure, part of the 50S ribosomal subunit. Forms a cluster with proteins L14 and L19.

Functionally, one of the primary rRNA binding proteins, it binds directly near the 3'-end of the 23S rRNA, where it nucleates assembly of the 50S subunit. The polypeptide is Large ribosomal subunit protein uL3 (rplC) (Wolinella succinogenes (strain ATCC 29543 / DSM 1740 / CCUG 13145 / JCM 31913 / LMG 7466 / NCTC 11488 / FDC 602W) (Vibrio succinogenes)).